The chain runs to 158 residues: NADPH-dependent 7-cyano-7-deazaguanine reductase (158 aa).

C56 (thioimide intermediate) is an active-site residue. Catalysis depends on D63, which acts as the Proton donor. Substrate contacts are provided by residues 78–80 (VES) and 97–98 (HE).

The protein belongs to the GTP cyclohydrolase I family. QueF type 1 subfamily.

It is found in the cytoplasm. It carries out the reaction 7-aminomethyl-7-carbaguanine + 2 NADP(+) = 7-cyano-7-deazaguanine + 2 NADPH + 3 H(+). It functions in the pathway tRNA modification; tRNA-queuosine biosynthesis. Its function is as follows. Catalyzes the NADPH-dependent reduction of 7-cyano-7-deazaguanine (preQ0) to 7-aminomethyl-7-deazaguanine (preQ1). In Rhodopseudomonas palustris (strain BisB5), this protein is NADPH-dependent 7-cyano-7-deazaguanine reductase.